The chain runs to 328 residues: Interleukin-12 subunit beta (328 aa).

Positions 1–22 are cleaved as a signal peptide; it reads MCHQQLVISWFSLVFLASPLVA. Positions 23–106 constitute an Ig-like C2-type domain; the sequence is IWELKKDVYV…LSHSLLLLHK (84 aa). 3 disulfides stabilise this stretch: cysteine 50-cysteine 90, cysteine 131-cysteine 142, and cysteine 170-cysteine 193. Asparagine 135 is a glycosylation site (N-linked (GlcNAc...) asparagine). N-linked (GlcNAc...) asparagine glycosylation occurs at asparagine 222. The Fibronectin type-III domain occupies 237-328; that stretch reads PPKNLQLKPL…WSEWASVPCS (92 aa). Cysteine 300 and cysteine 327 are joined by a disulfide. Residue tryptophan 319 is glycosylated (C-linked (Man) tryptophan).

Belongs to the IL-12B family. As to quaternary structure, heterodimer with IL12A; disulfide-linked. The heterodimer is known as interleukin IL-12. Heterodimer with IL23A; disulfide-linked. The heterodimer is known as interleukin IL-23. Also secreted as a monomer. Interacts with NBR1; this interaction promotes IL-12 secretion. In terms of processing, known to be C-mannosylated in the recombinant protein; it is not yet known for sure if the wild-type protein is also modified.

Its subcellular location is the secreted. In terms of biological role, cytokine that can act as a growth factor for activated T and NK cells, enhance the lytic activity of NK/lymphokine-activated killer cells, and stimulate the production of IFN-gamma by resting PBMC. Its function is as follows. Associates with IL23A to form the IL-23 interleukin, a heterodimeric cytokine which functions in innate and adaptive immunity. IL-23 may constitute with IL-17 an acute response to infection in peripheral tissues. IL-23 binds to a heterodimeric receptor complex composed of IL12RB1 and IL23R, activates the Jak-Stat signaling cascade, stimulates memory rather than naive T-cells and promotes production of pro-inflammatory cytokines. IL-23 induces autoimmune inflammation and thus may be responsible for autoimmune inflammatory diseases and may be important for tumorigenesis. The sequence is that of Interleukin-12 subunit beta (IL12B) from Homo sapiens (Human).